A 116-amino-acid polypeptide reads, in one-letter code: Ribonuclease P protein component (116 aa).

Belongs to the RnpA family. As to quaternary structure, consists of a catalytic RNA component (M1 or rnpB) and a protein subunit.

It carries out the reaction Endonucleolytic cleavage of RNA, removing 5'-extranucleotides from tRNA precursor.. Functionally, RNaseP catalyzes the removal of the 5'-leader sequence from pre-tRNA to produce the mature 5'-terminus. It can also cleave other RNA substrates such as 4.5S RNA. The protein component plays an auxiliary but essential role in vivo by binding to the 5'-leader sequence and broadening the substrate specificity of the ribozyme. The chain is Ribonuclease P protein component from Lachnoclostridium phytofermentans (strain ATCC 700394 / DSM 18823 / ISDg) (Clostridium phytofermentans).